Consider the following 424-residue polypeptide: Splicing factor 3B subunit 4 (424 aa).

Alanine 2 carries the post-translational modification N-acetylalanine. RRM domains are found at residues alanine 13–alanine 91 and alanine 100–lysine 179. The residue at position 56 (tyrosine 56) is a Phosphotyrosine. The interval proline 207–glutamine 424 is disordered. Positions asparagine 222 to glycine 231 are enriched in low complexity. Pro residues predominate over residues leucine 232–proline 268. Over residues histidine 303–histidine 323 the composition is skewed to low complexity. Composition is skewed to pro residues over residues glutamine 332 to proline 381 and proline 388 to glutamine 424.

Belongs to the SF3B4 family. In terms of assembly, component of the 17S U2 SnRNP complex, a ribonucleoprotein complex that contains small nuclear RNA (snRNA) U2 and a number of specific proteins. Part of the SF3B subcomplex of the 17S U2 SnRNP complex. SF3B associates with the splicing subcomplex SF3A and a 12S RNA unit to form the U2 small nuclear ribonucleoproteins complex (U2 snRNP). SF3B4 has been found in complex spliceosome 'B' and 'C' as well. Component of the minor (U12-type spliceosome) spliceosome. Found in a complex with PRMT9, SF3B2 and SF3B4.

Its subcellular location is the nucleus. Its function is as follows. Component of the 17S U2 SnRNP complex of the spliceosome, a large ribonucleoprotein complex that removes introns from transcribed pre-mRNAs. The 17S U2 SnRNP complex (1) directly participates in early spliceosome assembly and (2) mediates recognition of the intron branch site during pre-mRNA splicing by promoting the selection of the pre-mRNA branch-site adenosine, the nucleophile for the first step of splicing. Within the 17S U2 SnRNP complex, SF3B4 is part of the SF3B subcomplex, which is required for 'A' complex assembly formed by the stable binding of U2 snRNP to the branchpoint sequence in pre-mRNA. Sequence independent binding of SF3A and SF3B subcomplexes upstream of the branch site is essential, it may anchor U2 snRNP to the pre-mRNA. May also be involved in the assembly of the 'E' complex. Also acts as a component of the minor spliceosome, which is involved in the splicing of U12-type introns in pre-mRNAs. The protein is Splicing factor 3B subunit 4 (Sf3b4) of Rattus norvegicus (Rat).